Here is a 264-residue protein sequence, read N- to C-terminus: tRNA (guanine-N(1)-)-methyltransferase (264 aa).

Residues G125 and 145–150 each bind S-adenosyl-L-methionine; that span reads LGDFVL.

This sequence belongs to the RNA methyltransferase TrmD family. As to quaternary structure, homodimer.

It is found in the cytoplasm. It carries out the reaction guanosine(37) in tRNA + S-adenosyl-L-methionine = N(1)-methylguanosine(37) in tRNA + S-adenosyl-L-homocysteine + H(+). Its function is as follows. Specifically methylates guanosine-37 in various tRNAs. The chain is tRNA (guanine-N(1)-)-methyltransferase from Burkholderia cenocepacia (strain HI2424).